A 185-amino-acid polypeptide reads, in one-letter code: Anaphase-promoting complex subunit 10 (185 aa).

Thr2 carries the post-translational modification N-acetylthreonine. In terms of domain architecture, DOC spans 2-185 (TTPNKTPPGA…IDFMMYRSIR (184 aa)). Lys169 is subject to N6-acetyllysine.

Belongs to the APC10 family. In terms of assembly, the mammalian APC/C is composed at least of 14 distinct subunits ANAPC1, ANAPC2, CDC27/APC3, ANAPC4, ANAPC5, CDC16/APC6, ANAPC7, CDC23/APC8, ANAPC10, ANAPC11, CDC26/APC12, ANAPC13, ANAPC15 and ANAPC16 that assemble into a complex of at least 19 chains with a combined molecular mass of around 1.2 MDa; APC/C interacts with FZR1 and FBXO5. The C-terminus of APC10 binds to CDC27/APC3. Interacts with PIWIL1; interaction only takes place when PIWIL1 binds piRNA. Interacts with FBXO43; the interaction is direct.

The protein operates within protein modification; protein ubiquitination. Functionally, component of the anaphase promoting complex/cyclosome (APC/C), a cell cycle-regulated E3 ubiquitin ligase that controls progression through mitosis and the G1 phase of the cell cycle. The APC/C complex acts by mediating ubiquitination and subsequent degradation of target proteins: it mainly mediates the formation of 'Lys-11'-linked polyubiquitin chains and, to a lower extent, the formation of 'Lys-48'- and 'Lys-63'-linked polyubiquitin chains. The APC/C complex catalyzes assembly of branched 'Lys-11'-/'Lys-48'-linked branched ubiquitin chains on target proteins. This chain is Anaphase-promoting complex subunit 10 (Anapc10), found in Mus musculus (Mouse).